The following is a 312-amino-acid chain: Malate dehydrogenase (312 aa).

Residues 7–13 (GAAGGIG) and aspartate 34 contribute to the NAD(+) site. 2 residues coordinate substrate: arginine 81 and arginine 87. Residues asparagine 94 and 117-119 (ITN) contribute to the NAD(+) site. Substrate is bound by residues asparagine 119 and arginine 153. The active-site Proton acceptor is histidine 177. An NAD(+)-binding site is contributed by methionine 227.

It belongs to the LDH/MDH superfamily. MDH type 1 family. Homodimer.

The enzyme catalyses (S)-malate + NAD(+) = oxaloacetate + NADH + H(+). Its function is as follows. Catalyzes the reversible oxidation of malate to oxaloacetate. The protein is Malate dehydrogenase of Salmonella gallinarum (strain 287/91 / NCTC 13346).